Here is a 322-residue protein sequence, read N- to C-terminus: UV DNA damage endonuclease (322 aa).

The protein belongs to the uve1/UvsE family.

Its function is as follows. Component in a DNA repair pathway. Removal of UV LIGHT damaged nucleotides. Recognizes pyrimidine dimers and cleave a phosphodiester bond immediately 5' to the lesion. The protein is UV DNA damage endonuclease of Nostoc sp. (strain PCC 7120 / SAG 25.82 / UTEX 2576).